The sequence spans 108 residues: UPF0145 protein ACIAD2946 (108 aa).

Belongs to the UPF0145 family.

The polypeptide is UPF0145 protein ACIAD2946 (Acinetobacter baylyi (strain ATCC 33305 / BD413 / ADP1)).